The sequence spans 90 residues: U7-theraphotoxin-Hhn1g (90 aa).

The N-terminal stretch at methionine 1–serine 19 is a signal peptide. A propeptide spanning residues phenylalanine 20–glutamate 50 is cleaved from the precursor. Intrachain disulfides connect cysteine 51-cysteine 65, cysteine 58-cysteine 70, and cysteine 64-cysteine 81.

The protein belongs to the neurotoxin 10 (Hwtx-1) family. 13 (Hntx-13) subfamily. Expressed by the venom gland.

It is found in the secreted. In terms of biological role, ion channel inhibitor. The protein is U7-theraphotoxin-Hhn1g of Cyriopagopus hainanus (Chinese bird spider).